The sequence spans 521 residues: MNNMKRSKKPRVSWPPGPKLCQVKVFRTEDSPANVASQPQRHSYPSRKPRGPDLPPGFEGNHYAVKPNVSNIPRIKWKRPPPKFSVNDTWLVGCGGGSSEWQNENLRISKVLEAIYPHRSAIPSRPSVSPAVEAECFDDSKTPAIRLTPIEDESESSSEESSNSKVESGVTANKQGQLETKPLCSTQEQVSGLTGLAPDLSLAASAALTALMKTKEQGSLVDTELLIKFLSDPKLIKNLITDTSGKSSETKNQPIVTNINSATRPVPQPVSAVTASPMARKPQPVIIPQEHSVAVSRSFTNPERRVSPPKPVNGSISPPKPITGKPSSIPMPVHFHVGIAKEQPQPARFPSSSLPMNLNFHRPPNVFSEPKVIVNPQPQHQPYSAFRTSEMNYVQSSIGLGRGPQTGFNSYPMNFSRADAIGSAKPVVQPMKGLDYFKNLIREHGTDNHETNQYHSQTGIFNGRIDNNNKIHQQCIYFGTANGCNMGDSCTYVHDRYRPNFEAAAPRAKRMKFGRYERNGF.

3 disordered regions span residues 28–60 (TEDSPANVASQPQRHSYPSRKPRGPDLPPGFEG), 142–185 (TPAI…PLCS), and 296–319 (SRSFTNPERRVSPPKPVNGSISPP). A compositionally biased stretch (polar residues) spans 34 to 43 (NVASQPQRHS). Residues 159-168 (EESSNSKVES) are compositionally biased toward low complexity. Residues 170–185 (VTANKQGQLETKPLCS) are compositionally biased toward polar residues. Residues 469–497 (NKIHQQCIYFGTANGCNMGDSCTYVHDRY) form a C3H1-type zinc finger.

The sequence is that of Zinc finger CCCH domain-containing protein 45 from Arabidopsis thaliana (Mouse-ear cress).